The following is a 300-amino-acid chain: MQMENLITTFPEIEIKEHEPLAHYTNTKTGGPADWLAFPVDVAQVQQLVDYCHQTGLALTVIGNASNLIVRDGGIEGLVMILTRMQTVKVEGTMVTAAAGASYIEVTKIARDHSLTGLEFAAGIPGSIGGAIFMNAGAYGGETKTVVDHVTVMERDGQIHQLSNEEMDFGYRHSAVQASGAIVLDATFALKLGDQNAITAQMEDLNARRAAKQPLELPSCGSVFKRPTGYFAGKLIHDAGLQGYTSGGAQVSTKHAGFIVNVNHGTATDYLNVIHHVQETVQEKFGVQLETEVRIIGRQS.

The FAD-binding PCMH-type domain occupies 28-193; that stretch reads KTGGPADWLA…LDATFALKLG (166 aa). Arg172 is an active-site residue. The Proton donor role is filled by Ser222. Glu292 is a catalytic residue.

It belongs to the MurB family. FAD is required as a cofactor.

It is found in the cytoplasm. The catalysed reaction is UDP-N-acetyl-alpha-D-muramate + NADP(+) = UDP-N-acetyl-3-O-(1-carboxyvinyl)-alpha-D-glucosamine + NADPH + H(+). Its pathway is cell wall biogenesis; peptidoglycan biosynthesis. Cell wall formation. In Limosilactobacillus fermentum (strain NBRC 3956 / LMG 18251) (Lactobacillus fermentum), this protein is UDP-N-acetylenolpyruvoylglucosamine reductase.